Reading from the N-terminus, the 404-residue chain is Serine/threonine-protein kinase UCN (404 aa).

The Protein kinase domain maps to 22-340 (LKVLKLLGKG…AAEIKEHAFF (319 aa)). Residues 28–36 (LGKGATGTV) and Lys-55 each bind ATP. Asp-153 (proton acceptor) is an active-site residue. A disordered region spans residues 185-207 (EFYHLSDPEPDPNPESNLSHNKK). The 64-residue stretch at 341-404 (KGVRWELLTE…CSENNPFVDF (64 aa)) folds into the AGC-kinase C-terminal domain.

This sequence belongs to the protein kinase superfamily. AGC Ser/Thr protein kinase family. Expressed in the epidermis and cortex of the transition zone of the root apex and developing flowers. Expressed in rosette leaves, stems and siliques.

The protein resides in the cytoplasm. Its subcellular location is the nucleus. The enzyme catalyses L-seryl-[protein] + ATP = O-phospho-L-seryl-[protein] + ADP + H(+). It catalyses the reaction L-threonyl-[protein] + ATP = O-phospho-L-threonyl-[protein] + ADP + H(+). In terms of biological role, regulates planar ovule integument development by suppressing aberrantly oriented growth. Maintains planar growth of integuments by repressing the developmental regulator and transcription factor KAN4 which is involved in the control of early integument growth and polarity. Restricts growth in stamen filaments, petals, and cotyledons. This chain is Serine/threonine-protein kinase UCN, found in Arabidopsis thaliana (Mouse-ear cress).